Reading from the N-terminus, the 1188-residue chain is Integrin alpha-11 (1188 aa).

An N-terminal signal peptide occupies residues 1 to 22 (MDFPRGLLVAWTLSLWPGFTDT). Over 23 to 1141 (FNMDTRNPRV…ISKQEDWQVP (1119 aa)) the chain is Extracellular. FG-GAP repeat units follow at residues 24–85 (NMDT…NCTK) and 91–151 (VTLS…FSKT). A disulfide bridge connects residues Cys76 and Cys83. N-linked (GlcNAc...) asparagine glycans are attached at residues Asn82 and Asn95. 2 cysteine pairs are disulfide-bonded: Cys121–Cys139 and Cys129–Cys159. Residues 164-345 (DIVIVLDGSN…AALKDIVDAL (182 aa)) form the VWFA domain. N-linked (GlcNAc...) asparagine glycosylation is found at Asn291, Asn331, Asn358, Asn449, and Asn462. FG-GAP repeat units follow at residues 355–406 (TNKN…VIPH), 411–461 (LKEF…SMHN), 462–527 (NRSL…RFVY), 528–586 (NGTL…NILK), and 590–650 (QRIT…FEPS). Positions 488, 490, 492, and 496 each coordinate Ca(2+). Asn528 carries N-linked (GlcNAc...) asparagine glycosylation. Ca(2+)-binding residues include Asp551, Asn553, Asp555, Asp559, Asp613, Asn615, Asp617, and Asp621. A glycan (N-linked (GlcNAc...) asparagine) is linked at Asn642. 3 cysteine pairs are disulfide-bonded: Cys659–Cys668, Cys674–Cys729, and Cys781–Cys787. Asn694 carries N-linked (GlcNAc...) asparagine glycosylation. The N-linked (GlcNAc...) asparagine glycan is linked to Asn857. A disulfide bridge connects residues Cys881 and Cys893. Residues Asn894, Asn973, Asn1031, Asn1039, and Asn1059 are each glycosylated (N-linked (GlcNAc...) asparagine). A helical transmembrane segment spans residues 1142–1164 (IWIIVGSTLGGLLLLALLVLALW). Residues 1165 to 1188 (KLGFFKSAKRKREPGLGPIPKELK) are Cytoplasmic-facing.

Belongs to the integrin alpha chain family. Heterodimer of an alpha and a beta subunit. Alpha-11 associates with beta-1. Interacts with RAB21.

The protein resides in the membrane. Integrin alpha-11/beta-1 is a receptor for collagen. The chain is Integrin alpha-11 (Itga11) from Mus musculus (Mouse).